Consider the following 771-residue polypeptide: Ribonucleoside-diphosphate reductase large subunit (771 aa).

In terms of domain architecture, ATP-cone spans 1 to 92 (MFVIKRNGYK…VSNLHKETKK (92 aa)). ATP contacts are provided by residues 5 to 6 (KR), 11 to 17 (ENVMFDK), threonine 53, aspartate 57, and lysine 88. Residues serine 202 and serine 217 each contribute to the GDP site. DTTP-binding positions include 226–228 (DSI), lysine 243, and arginine 256. Asparagine 427 is a GDP binding site. Catalysis depends on asparagine 427, which acts as the Proton acceptor. The active-site Cysteine radical intermediate is the cysteine 429. GDP-binding positions include glutamate 431 and 603-606 (TAST). Glutamate 431 functions as the Proton acceptor in the catalytic mechanism.

The protein belongs to the ribonucleoside diphosphate reductase large chain family. In terms of assembly, interacts with RNR2/OPG047 subunit. Requires Mg(2+) as cofactor.

The enzyme catalyses a 2'-deoxyribonucleoside 5'-diphosphate + [thioredoxin]-disulfide + H2O = a ribonucleoside 5'-diphosphate + [thioredoxin]-dithiol. Its function is as follows. Ribonucleoside-diphosphate reductase holoenzyme provides the precursors necessary for viral DNA synthesis. Allows virus growth in non-dividing cells. Catalyzes the biosynthesis of deoxyribonucleotides from the corresponding ribonucleotides. The protein is Ribonucleoside-diphosphate reductase large subunit (OPG080) of Homo sapiens (Human).